A 338-amino-acid polypeptide reads, in one-letter code: tRNA N6-adenosine threonylcarbamoyltransferase (338 aa).

2 residues coordinate Fe cation: H111 and H115. Residues 134 to 138 (LVSGG), D167, G180, and N272 contribute to the substrate site. D300 is a Fe cation binding site.

The protein belongs to the KAE1 / TsaD family. Requires Fe(2+) as cofactor.

The protein resides in the cytoplasm. It catalyses the reaction L-threonylcarbamoyladenylate + adenosine(37) in tRNA = N(6)-L-threonylcarbamoyladenosine(37) in tRNA + AMP + H(+). Functionally, required for the formation of a threonylcarbamoyl group on adenosine at position 37 (t(6)A37) in tRNAs that read codons beginning with adenine. Is involved in the transfer of the threonylcarbamoyl moiety of threonylcarbamoyl-AMP (TC-AMP) to the N6 group of A37, together with TsaE and TsaB. TsaD likely plays a direct catalytic role in this reaction. This Nitrosomonas eutropha (strain DSM 101675 / C91 / Nm57) protein is tRNA N6-adenosine threonylcarbamoyltransferase.